Reading from the N-terminus, the 59-residue chain is MSADVKVTLVRSHIGKASSVKAVLVGMGLTKRQKSVTLKDTPEVRGMINKVRHLLKVEE.

It belongs to the universal ribosomal protein uL30 family. As to quaternary structure, part of the 50S ribosomal subunit.

The protein is Large ribosomal subunit protein uL30 of Geotalea uraniireducens (strain Rf4) (Geobacter uraniireducens).